A 159-amino-acid polypeptide reads, in one-letter code: Thymic stromal lymphopoietin (159 aa).

An N-terminal signal peptide occupies residues 1-28; the sequence is MFPFALLYVLSVSFRKIFILQLVGLVLT. 3 disulfides stabilise this stretch: C34-C110, C69-C75, and C90-C137. N-linked (GlcNAc...) asparagine glycosylation is present at N64. N119 is a glycosylation site (N-linked (GlcNAc...) asparagine).

As to quaternary structure, interacts with a receptor composed of CRLF2 and IL7R. Binding of TSLP to CRLF2/TSLPR is a mechanistic prerequisite for recruitment of IL7R to the high-affinity ternary complex. In terms of tissue distribution, isoform 1 is expressed in a number of tissues including heart, liver and prostate. Isoform 2 is the predominant form in keratinocytes of oral mucosa, skin and in salivary glands. It is secreted into saliva.

It localises to the secreted. Functionally, cytokine that induces the release of T-cell-attracting chemokines from monocytes and, in particular, enhances the maturation of CD11c(+) dendritic cells. Can induce allergic inflammation by directly activating mast cells. In terms of biological role, may act as an antimicrobial peptide in the oral cavity and on the skin. In Homo sapiens (Human), this protein is Thymic stromal lymphopoietin (TSLP).